Here is a 170-residue protein sequence, read N- to C-terminus: ATP synthase subunit b (170 aa).

The helical transmembrane segment at 15-37 threads the bilayer; sequence FNLFETNILNWAVVIFGLYKFLP. The interval 72–98 is disordered; it reads AKKDLSSAEEKASQIKADSLKRSESIR.

It belongs to the ATPase B chain family. F-type ATPases have 2 components, F(1) - the catalytic core - and F(0) - the membrane proton channel. F(1) has five subunits: alpha(3), beta(3), gamma(1), delta(1), epsilon(1). F(0) has four main subunits: a(1), b(1), b'(1) and c(10-14). The alpha and beta chains form an alternating ring which encloses part of the gamma chain. F(1) is attached to F(0) by a central stalk formed by the gamma and epsilon chains, while a peripheral stalk is formed by the delta, b and b' chains.

The protein resides in the cellular thylakoid membrane. Its function is as follows. F(1)F(0) ATP synthase produces ATP from ADP in the presence of a proton or sodium gradient. F-type ATPases consist of two structural domains, F(1) containing the extramembraneous catalytic core and F(0) containing the membrane proton channel, linked together by a central stalk and a peripheral stalk. During catalysis, ATP synthesis in the catalytic domain of F(1) is coupled via a rotary mechanism of the central stalk subunits to proton translocation. Component of the F(0) channel, it forms part of the peripheral stalk, linking F(1) to F(0). The protein is ATP synthase subunit b of Prochlorococcus marinus (strain MIT 9215).